We begin with the raw amino-acid sequence, 872 residues long: Facilitated trehalose transporter Tret1 (872 aa).

Disordered stretches follow at residues 1–40, 53–217, 262–281, and 293–315; these read MSGRDNRGAGGGGGGGGGGSGGGHHHHQPLSSAMGKLKEK, VESN…KATS, SSSEEEFHKTRREFQGRKHQ, and KVLQGSSTDSDEEGDDAEHKRLI. Topologically, residues 1 to 406 are cytoplasmic; sequence MSGRDNRGAG…VYRPTTNPIY (406 aa). The span at 8–22 shows a compositional bias: gly residues; it reads GAGGGGGGGGGGSGG. Composition is skewed to low complexity over residues 55 to 68, 84 to 98, and 121 to 132; these read SNLSTSNTATSLDT, RHPQQSPSQSQQQQR, and PPTQQQPQQQHQ. Phosphoserine is present on residues Ser-262, Ser-263, and Ser-264. Phosphoserine occurs at positions 334 and 336. A disordered region spans residues 340-361; the sequence is FLTSRQHFQQQRSISTDSRKSR. Positions 344–355 are enriched in polar residues; the sequence is RQHFQQQRSIST. The chain crosses the membrane as a helical span at residues 407 to 427; sequence IWTQVLAALSVSLGSLVVGFV. The Extracellular portion of the chain corresponds to 428–454; the sequence is SAYTSPALITMTNGNITSFEVTPQAAS. N-linked (GlcNAc...) asparagine glycosylation occurs at Asn-442. The helical transmembrane segment at 455-475 threads the bilayer; the sequence is WVGGIMPLAGLLGGIAGGPFI. Residues 476–488 are Cytoplasmic-facing; sequence EYLGRRNTILTTA. A helical membrane pass occupies residues 489–509; sequence VPFIVSSLLIACAVNITMVLL. At 510–511 the chain is on the extracellular side; that stretch reads GR. Residues 512–532 form a helical membrane-spanning segment; sequence FLAGFCVGIASLSLPVYLGET. Topologically, residues 533-538 are cytoplasmic; it reads VQPEVR. Residues 539–559 traverse the membrane as a helical segment; sequence GTLGLLPTAFGNIGILLCFVA. Over 560–566 the chain is Extracellular; the sequence is GTYMDWS. Residues 567 to 587 traverse the membrane as a helical segment; that stretch reads MLAFLGAALPVPFLILMFLIP. Over 588-650 the chain is Cytoplasmic; that stretch reads ETPRWYVSRG…ELLKRNNLKP (63 aa). The chain crosses the membrane as a helical span at residues 651 to 671; sequence LSISLGLMFFQQLSGINAVIF. Over 672-687 the chain is Extracellular; it reads YTVQIFKDAGSTIDGN. A helical membrane pass occupies residues 688–708; that stretch reads VCTIIVGIVNFMATFIGIILI. Over 709 to 714 the chain is Cytoplasmic; that stretch reads DRAGRK. A helical membrane pass occupies residues 715–735; that stretch reads ILLYVSNVAMIITLFVLGGFF. Residues 736 to 755 are Extracellular-facing; that stretch reads YCKDKAGIDVSNVGWLPLSC. Residues 756–776 traverse the membrane as a helical segment; that stretch reads FVVYILGFSLGFGPIPWLMMG. The Cytoplasmic portion of the chain corresponds to 777-784; the sequence is EILPAKIR. A helical transmembrane segment spans residues 785-803; that stretch reads GSAASVATAFNWTCTFVVT. Residues 804–816 lie on the Extracellular side of the membrane; that stretch reads KTFQDMLDVIGSY. Residues 817–837 form a helical membrane-spanning segment; the sequence is GAFWLFGAICFIGLFFVIIYV. Residues 838-872 are Cytoplasmic-facing; sequence PETQGKTLEDIERKMMGRVRRMSSVANIKPLSFNM. Phosphoserine occurs at positions 860 and 861.

It belongs to the major facilitator superfamily. Sugar transporter (TC 2.A.1.1) family. Trehalose transporter subfamily.

It is found in the cell membrane. Functionally, low-capacity facilitative transporter for trehalose. Does not transport maltose, sucrose or lactose. Mediates the bidirectional transfer of trehalose. Responsible for the transport of trehalose synthesized in the fat body and the incorporation of trehalose into other tissues that require a carbon source, thereby regulating trehalose levels in the hemolymph. The sequence is that of Facilitated trehalose transporter Tret1 from Drosophila willistoni (Fruit fly).